A 101-amino-acid polypeptide reads, in one-letter code: Small ribosomal subunit protein uS14 (101 aa).

This sequence belongs to the universal ribosomal protein uS14 family. As to quaternary structure, part of the 30S ribosomal subunit. Contacts proteins S3 and S10.

Binds 16S rRNA, required for the assembly of 30S particles and may also be responsible for determining the conformation of the 16S rRNA at the A site. The sequence is that of Small ribosomal subunit protein uS14 from Haemophilus influenzae (strain PittGG).